The sequence spans 196 residues: GTP cyclohydrolase-2 (196 aa).

Arginine 49–glutamate 53 serves as a coordination point for GTP. Zn(2+)-binding residues include cysteine 54, cysteine 65, and cysteine 67. GTP-binding positions include glutamine 70, glutamate 92–arginine 94, and threonine 114. The active-site Proton acceptor is the aspartate 126. The active-site Nucleophile is arginine 128. Positions 149 and 154 each coordinate GTP.

It belongs to the GTP cyclohydrolase II family. Homodimer. The cofactor is Zn(2+).

It carries out the reaction GTP + 4 H2O = 2,5-diamino-6-hydroxy-4-(5-phosphoribosylamino)-pyrimidine + formate + 2 phosphate + 3 H(+). It functions in the pathway cofactor biosynthesis; riboflavin biosynthesis; 5-amino-6-(D-ribitylamino)uracil from GTP: step 1/4. Its function is as follows. Catalyzes the conversion of GTP to 2,5-diamino-6-ribosylamino-4(3H)-pyrimidinone 5'-phosphate (DARP), formate and pyrophosphate. This chain is GTP cyclohydrolase-2, found in Escherichia coli O45:K1 (strain S88 / ExPEC).